The primary structure comprises 268 residues: Octanoyltransferase (268 aa).

One can recognise a BPL/LPL catalytic domain in the interval 73–261; that stretch reads GEADELVWLL…AFEEVFGPAV (189 aa). Residues 112–119, 192–194, and 205–207 contribute to the substrate site; these read RGGEYTYH, ALG, and GLS. Cys223 acts as the Acyl-thioester intermediate in catalysis.

It belongs to the LipB family.

The protein localises to the cytoplasm. It catalyses the reaction octanoyl-[ACP] + L-lysyl-[protein] = N(6)-octanoyl-L-lysyl-[protein] + holo-[ACP] + H(+). It participates in protein modification; protein lipoylation via endogenous pathway; protein N(6)-(lipoyl)lysine from octanoyl-[acyl-carrier-protein]: step 1/2. In terms of biological role, catalyzes the transfer of endogenously produced octanoic acid from octanoyl-acyl-carrier-protein onto the lipoyl domains of lipoate-dependent enzymes. Lipoyl-ACP can also act as a substrate although octanoyl-ACP is likely to be the physiological substrate. The protein is Octanoyltransferase of Agrobacterium fabrum (strain C58 / ATCC 33970) (Agrobacterium tumefaciens (strain C58)).